Consider the following 198-residue polypeptide: Ribonuclease HII (198 aa).

An RNase H type-2 domain is found at 9-198 (ITVAGADEAG…LLPDQLKIDF (190 aa)). Residues aspartate 15, glutamate 16, and aspartate 107 each contribute to the a divalent metal cation site.

Belongs to the RNase HII family. It depends on Mn(2+) as a cofactor. Requires Mg(2+) as cofactor.

It localises to the cytoplasm. The enzyme catalyses Endonucleolytic cleavage to 5'-phosphomonoester.. Functionally, endonuclease that specifically degrades the RNA of RNA-DNA hybrids. This is Ribonuclease HII from Christiangramia forsetii (strain DSM 17595 / CGMCC 1.15422 / KT0803) (Gramella forsetii).